The primary structure comprises 333 residues: Phosphate acetyltransferase (333 aa).

It belongs to the phosphate acetyltransferase and butyryltransferase family. Homodimer.

It localises to the cell membrane. The enzyme catalyses acetyl-CoA + phosphate = acetyl phosphate + CoA. Its pathway is metabolic intermediate biosynthesis; acetyl-CoA biosynthesis; acetyl-CoA from acetate: step 2/2. This Methanosarcina thermophila protein is Phosphate acetyltransferase (pta).